The sequence spans 360 residues: Arginase, non-hepatic 1 (360 aa).

Residues histidine 122, aspartate 145, histidine 147, and aspartate 149 each contribute to the Mn(2+) site. Residues 147 to 151, 158 to 160, and aspartate 204 contribute to the substrate site; these read HADIN and SGN. Aspartate 253 and aspartate 255 together coordinate Mn(2+). Positions 267 and 298 each coordinate substrate.

The protein belongs to the arginase family. In terms of assembly, homotrimer. It depends on Mn(2+) as a cofactor. As to expression, expressed at differing tadpole stages in tail, intestine, hindlimb and trunk region. Most abundant in tadpole tail.

It catalyses the reaction L-arginine + H2O = urea + L-ornithine. It functions in the pathway nitrogen metabolism; urea cycle; L-ornithine and urea from L-arginine: step 1/1. Functionally, as well as its role in the urea cycle, may be involved in tissue remodeling. This Xenopus laevis (African clawed frog) protein is Arginase, non-hepatic 1 (arg2-a).